Reading from the N-terminus, the 483-residue chain is S-adenosylhomocysteine hydrolase-like protein 1 (483 aa).

Positions 1–56 (MQEFTKFPTKTGRRSLSRSISQSSTDSYSSAASYTDSSDDEVSPREKQQTNSKGSS) are disordered. The segment covering 17–36 (SRSISQSSTDSYSSAASYTD) has biased composition (low complexity). The segment at 18–45 (RSISQSSTDSYSSAASYTDSSDDEVSPR) is PEST. The residue at position 21 (S21) is a Phosphoserine; by PKD. Phosphoserine occurs at positions 24, 27, 30, and 37. An interaction with BCL2L10 region spans residues 91–154 (QGEKPLAGAK…EAGVAVFAWK (64 aa)). Substrate is bound by residues T108, D182, E207, K237, and D241. Residues 234–401 (SVTKQKFDNL…EGRLLNLSCS (168 aa)) form an NAD binding region. Residues 271-275 (GYGEV), E294, and N329 each bind NAD(+). Residue S344 is modified to Phosphoserine. 350-352 (MGH) contacts NAD(+). A PDZ-binding region spans residues 473-483 (NGPFKPNYYRY).

This sequence belongs to the adenosylhomocysteinase family. In terms of assembly, forms multimers. Forms heteromultimers with AHCYL2 (via the C-terminal region). Interacts (when phosphorylated) with ITPR1 (when not phosphorylated); the interaction suppresses inositol 1,4,5-trisphosphate binding to ITPR1. Interacts with BCL2L10; this strengthens the interaction of AHCYL1 with ITPR1. Interacts with CFTR and SLC26A6; the interactions take place once AHCYL1 is released from ITPR1 and increase CFTR and SLC26A6 activities. Interacts with RRM1; in a phosphorylation- and (dATP)-dependent manner. Interacts (via PEST domain when phosphorylated) with SLC4A4 isoform 1 but not isoform 2; the interaction increases SLC4A4 isoform 1 activity. Interacts (when phosphorylated) with SLC9A3; the interaction is required for SLC9A3 apical location and activity. Interacts (when phosphorylated) with FIP1L1; the interaction is direct and associates AHCYL1 with the CPSF complex and RNA. Interacts with PAPOLA. Interacts with ZCCHC4. Interacts with AHCY. The cofactor is NAD(+). Phosphorylated at Ser/Thr residues between Ser-21 and Thr-25 in the PEST region: required for interaction with dATP-bound RRM1 and ITPR1. Phosphorylation at Ser-21 by PRKD1 and CAMK4 is required for further phosphorylations by CSNK1A1. Phosphorylation is induced by oxidative stress. Probably phosphorylated by CAMK2A; phosphorylation at Ser-21 may be required for interaction with SLC9A3. Dephosphorylated in response to apoptotic stress conditions which causes translocation of both AHCYL1 and BCL2L10 from mitochondria-associated endoplasmic reticulum membranes and promotes apoptosis. Expressed in kidney proximal tubules and outer medulla (at protein level).

Its subcellular location is the endoplasmic reticulum. It localises to the cytoplasm. It is found in the cytosol. The protein resides in the apical cell membrane. The protein localises to the microsome. Its function is as follows. Multifaceted cellular regulator which coordinates several essential cellular functions including regulation of epithelial HCO3(-) and fluid secretion, mRNA processing and DNA replication. Regulates ITPR1 sensitivity to inositol 1,4,5-trisphosphate, competing for the common binding site and acting as endogenous 'pseudoligand' whose inhibitory activity can be modulated by its phosphorylation status. Promotes the formation of contact points between the endoplasmic reticulum (ER) and mitochondria, facilitating transfer of Ca(2+) from the ER to mitochondria. Under normal cellular conditions, functions cooperatively with BCL2L10 to limit ITPR1-mediated Ca(2+) release but, under apoptotic stress conditions, dephosphorylated which promotes dissociation of both AHCYL1 and BCL2L10 from mitochondria-associated endoplasmic reticulum membranes, inhibits BCL2L10 interaction with ITPR1 and leads to increased Ca(2+) transfer to mitochondria which promotes apoptosis. In the pancreatic and salivary ducts, at resting state, attenuates inositol 1,4,5-trisphosphate-induced calcium release by interacting with ITPR1. When extracellular stimuli induce ITPR1 phosphorylation or inositol 1,4,5-trisphosphate production, dissociates from ITPR1 to interact with CFTR and SLC26A6, mediating their synergistic activation by calcium and cAMP that stimulates the epithelial secretion of electrolytes and fluid. Also activates basolateral SLC4A4 isoform 1 to coordinate fluid and HCO3(-) secretion. Inhibits the effect of STK39 on SLC4A4 and CFTR by recruiting PP1 phosphatase which activates SLC4A4, SLC26A6 and CFTR through dephosphorylation. Mediates the induction of SLC9A3 surface expression produced by Angiotensin-2. Depending on the cell type, activates SLC9A3 in response to calcium or reverses SLC9A3R2-dependent calcium inhibition. May modulate the polyadenylation state of specific mRNAs, both by controlling the subcellular location of FIP1L1 and by inhibiting PAPOLA activity, in response to a stimulus that alters its phosphorylation state. Acts as a (dATP)-dependent inhibitor of ribonucleotide reductase large subunit RRM1, controlling the endogenous dNTP pool and ensuring normal cell cycle progression. In vitro does not exhibit any S-adenosyl-L-homocysteine hydrolase activity. The chain is S-adenosylhomocysteine hydrolase-like protein 1 from Rattus norvegicus (Rat).